Reading from the N-terminus, the 368-residue chain is MTEKARKRIVVAMSGGVDSSVTAALLKEEGHEVIGISMQVWDYSKFSAPEGEKFDTCCSLDDIHDARRVAEQIGIPFYVVNFEEEFQRLVIDDFVDEYFRGRTPNPCVRCNQRVKFELLLRKARELGADLLATGHYARIERGGDGLFHLLRGDDPGKDQSYFLFTLTQEQLARVTFPLGGMTKPEVRQLATRFGLRVAEKGESQEICFVPDNDYVRFLEDERGAGQLVGEIVDRAGTVLGHHEGTYRYTVGQRRGLGIAHPHPLYVVGVDAERRQVIVGPKEELLAPGLVATDVTWVIALATETLEAACKIRYRHHPVPCTVTVLAGNRAQVRFREPEKSVTPGQAVVFYHGDEVLGGGWIDAAMTEG.

ATP contacts are provided by residues 12–19 (AMSGGVDS) and methionine 38. Catalysis depends on cysteine 110, which acts as the Nucleophile. Residues cysteine 110 and cysteine 207 are joined by a disulfide bond. Glycine 134 lines the ATP pocket. The tract at residues 157 to 159 (KDQ) is interaction with tRNA. Catalysis depends on cysteine 207, which acts as the Cysteine persulfide intermediate. Residues 312–313 (RY) are interaction with tRNA.

The protein belongs to the MnmA/TRMU family.

It is found in the cytoplasm. It catalyses the reaction S-sulfanyl-L-cysteinyl-[protein] + uridine(34) in tRNA + AH2 + ATP = 2-thiouridine(34) in tRNA + L-cysteinyl-[protein] + A + AMP + diphosphate + H(+). Catalyzes the 2-thiolation of uridine at the wobble position (U34) of tRNA, leading to the formation of s(2)U34. In Geobacter metallireducens (strain ATCC 53774 / DSM 7210 / GS-15), this protein is tRNA-specific 2-thiouridylase MnmA.